Reading from the N-terminus, the 503-residue chain is Protein ERGIC-53-like (503 aa).

An N-terminal signal peptide occupies residues 1 to 25 (MLKTGGLSPSLCLLSLLLALHSAER). Residues 26 to 439 (SYPPPQRRFE…WLPGFSTCLR (414 aa)) are Lumenal-facing. The L-type lectin-like domain maps to 32 to 253 (RRFEYKLSFK…DVLSFLTFSL (222 aa)). A disulfide bridge connects residues cysteine 177 and cysteine 216. A helical membrane pass occupies residues 440–460 (TSIFLFFLLIQTVGFFCYMNF). Topologically, residues 461–503 (RQELDKRLQEYLFTESISLQPALPIPRTIGVLRRQPVSPSMQA) are cytoplasmic.

Predominantly expressed in the sublingual salivary gland, in the mucous cells of the acini, but not in the serous cells, nor in the duct system (at protein level). Not detected in the submandilar, nor the parotid glands. Expressed in the mucous glands, but not detected in the serous glands (at protein level). Besides the salivary glands, expressed in the Brunner's glands in the duodenum, but no other mucous or serous glands (at protein level).

It localises to the endoplasmic reticulum-Golgi intermediate compartment membrane. The protein is Protein ERGIC-53-like (Lman1l) of Rattus norvegicus (Rat).